Consider the following 186-residue polypeptide: ATP synthase subunit delta (186 aa).

The protein belongs to the ATPase delta chain family. As to quaternary structure, F-type ATPases have 2 components, F(1) - the catalytic core - and F(0) - the membrane proton channel. F(1) has five subunits: alpha(3), beta(3), gamma(1), delta(1), epsilon(1). F(0) has three main subunits: a(1), b(2) and c(10-14). The alpha and beta chains form an alternating ring which encloses part of the gamma chain. F(1) is attached to F(0) by a central stalk formed by the gamma and epsilon chains, while a peripheral stalk is formed by the delta and b chains.

It localises to the cellular chromatophore membrane. Its function is as follows. F(1)F(0) ATP synthase produces ATP from ADP in the presence of a proton or sodium gradient. F-type ATPases consist of two structural domains, F(1) containing the extramembraneous catalytic core and F(0) containing the membrane proton channel, linked together by a central stalk and a peripheral stalk. During catalysis, ATP synthesis in the catalytic domain of F(1) is coupled via a rotary mechanism of the central stalk subunits to proton translocation. In terms of biological role, this protein is part of the stalk that links CF(0) to CF(1). It either transmits conformational changes from CF(0) to CF(1) or is implicated in proton conduction. The sequence is that of ATP synthase subunit delta from Rhodobacter capsulatus (Rhodopseudomonas capsulata).